We begin with the raw amino-acid sequence, 312 residues long: Malate dehydrogenase (312 aa).

NAD(+) is bound by residues 7–13 (GAAGGIG) and aspartate 34. 2 residues coordinate substrate: arginine 81 and arginine 87. NAD(+)-binding positions include asparagine 94 and 117-119 (ITN). Substrate-binding residues include asparagine 119 and arginine 153. The active-site Proton acceptor is histidine 177. Position 227 (methionine 227) interacts with NAD(+).

The protein belongs to the LDH/MDH superfamily. MDH type 1 family. In terms of assembly, homodimer.

The enzyme catalyses (S)-malate + NAD(+) = oxaloacetate + NADH + H(+). Its function is as follows. Catalyzes the reversible oxidation of malate to oxaloacetate. The protein is Malate dehydrogenase of Photorhabdus laumondii subsp. laumondii (strain DSM 15139 / CIP 105565 / TT01) (Photorhabdus luminescens subsp. laumondii).